Here is a 300-residue protein sequence, read N- to C-terminus: MSSQSSILVDFRPLATSFTGKYGSIQYCVRAVLERPQVPDQSVRRELQVVSHVDVNTPPLLTPMLKTQEKMVGCWLFTSGPVSLSVKIERKGYCNGEAIPIYAEIENCSSRLVVPKAAIFQTQTYLASGKTKTVRHMVANVRGNHIGSGSTDTWNGKMLKIPPVTPSILDCCIIRVYIHIPGAKKLMLELPLVIGTIPYSGFGRRNSSMASQFSMDMCWLALALPEQPEAPPNYADVVSEEEFSRHIPPYPQPSACDGEACYSMFACIQEFRFQPPPLYSESHAQLFCLQPVGPTNRAHF.

2 short sequence motifs (PPxY motif) span residues 231–234 (PPNY) and 276–279 (PPLY).

It belongs to the arrestin family. Interacts with ADRB2. Interacts (via PPxY motifs) with ITCH, NEDD4L and WWP2. Interacts with AVPR2. Identified in a complex containing at least ARRDC4, AVPR2 and HGS. Interacts with SLC11A2; controls the incorporation of SLC11A2 into extracellular vesicles through an ubiquitination-dependent mechanism. Interacts with TRIM65.

The protein localises to the early endosome. It is found in the cell membrane. It localises to the cytoplasmic vesicle. Functions as an adapter recruiting ubiquitin-protein ligases to their specific substrates. Plays a role in endocytosis of activated G protein-coupled receptors (GPCRs) Through an ubiquitination-dependent mechanism also plays a role in the incorporation of SLC11A2 into extracellular vesicles. May play a role in glucose uptake. Participates in innate immune response by promoting IFIH1/MDA5 activation through interaction with TRIM65. The protein is Arrestin domain-containing protein 4 (Arrdc4) of Rattus norvegicus (Rat).